Consider the following 294-residue polypeptide: Putative HTH-type transcriptional regulatory protein STK_12680 (294 aa).

One can recognise an HTH cro/C1-type domain in the interval 123 to 175; that stretch reads LKKKREEMGLSLGEVAQALGVSRISIYDYEREDSYVSIDIAEKLVELFGDDIL. The H-T-H motif DNA-binding region spans 134–153; it reads LGEVAQALGVSRISIYDYER.

In Sulfurisphaera tokodaii (strain DSM 16993 / JCM 10545 / NBRC 100140 / 7) (Sulfolobus tokodaii), this protein is Putative HTH-type transcriptional regulatory protein STK_12680.